A 117-amino-acid polypeptide reads, in one-letter code: Large ribosomal subunit protein uL18 (117 aa).

It belongs to the universal ribosomal protein uL18 family. Part of the 50S ribosomal subunit; part of the 5S rRNA/L5/L18/L25 subcomplex. Contacts the 5S and 23S rRNAs.

This is one of the proteins that bind and probably mediate the attachment of the 5S RNA into the large ribosomal subunit, where it forms part of the central protuberance. This Photorhabdus laumondii subsp. laumondii (strain DSM 15139 / CIP 105565 / TT01) (Photorhabdus luminescens subsp. laumondii) protein is Large ribosomal subunit protein uL18.